The primary structure comprises 490 residues: Bifunctional protein HldE (490 aa).

Positions 1–330 are ribokinase; the sequence is MLDFEAVLPA…RKVLPPASLA (330 aa). Residue 205–208 coordinates ATP; it reads NRKE. The active site involves D275. Residues 358 to 490 form a cytidylyltransferase region; that stretch reads FTNGCFDILH…LVARAQNGKA (133 aa).

It in the N-terminal section; belongs to the carbohydrate kinase PfkB family. The protein in the C-terminal section; belongs to the cytidylyltransferase family. As to quaternary structure, homodimer.

The catalysed reaction is D-glycero-beta-D-manno-heptose 7-phosphate + ATP = D-glycero-beta-D-manno-heptose 1,7-bisphosphate + ADP + H(+). The enzyme catalyses D-glycero-beta-D-manno-heptose 1-phosphate + ATP + H(+) = ADP-D-glycero-beta-D-manno-heptose + diphosphate. It participates in nucleotide-sugar biosynthesis; ADP-L-glycero-beta-D-manno-heptose biosynthesis; ADP-L-glycero-beta-D-manno-heptose from D-glycero-beta-D-manno-heptose 7-phosphate: step 1/4. Its pathway is nucleotide-sugar biosynthesis; ADP-L-glycero-beta-D-manno-heptose biosynthesis; ADP-L-glycero-beta-D-manno-heptose from D-glycero-beta-D-manno-heptose 7-phosphate: step 3/4. In terms of biological role, catalyzes the phosphorylation of D-glycero-D-manno-heptose 7-phosphate at the C-1 position to selectively form D-glycero-beta-D-manno-heptose-1,7-bisphosphate. Catalyzes the ADP transfer from ATP to D-glycero-beta-D-manno-heptose 1-phosphate, yielding ADP-D-glycero-beta-D-manno-heptose. This Rhodopseudomonas palustris (strain BisB18) protein is Bifunctional protein HldE.